The primary structure comprises 60 residues: Potassium channel toxin alpha-KTx 29.3 (60 aa).

An N-terminal signal peptide occupies residues 1-28 (MKSVCGVLIILVVLTTMLSISTFSTVGA). 3 disulfides stabilise this stretch: Cys-32–Cys-51, Cys-40–Cys-56, and Cys-44–Cys-58.

This sequence belongs to the short scorpion toxin superfamily. Potassium channel inhibitor family. Alpha-KTx 29 subfamily. Expressed by the venom gland.

The protein resides in the secreted. Functionally, weakly inhibits the Kv1.3/KCNA3 channel (1 uM of thetoxin inhibits currents by 13.2%) and Kv7.1/KCNQ1 channel (10 uM of the toxin inhibits currents by 27.7%). This Lychas mucronatus (Chinese swimming scorpion) protein is Potassium channel toxin alpha-KTx 29.3.